The chain runs to 348 residues: AT-hook motif nuclear-localized protein 9 (348 aa).

A disordered region spans residues 18 to 156; it reads HRGLSGSGPP…MASVGELMPS (139 aa). A compositionally biased stretch (polar residues) spans 31–46; the sequence is GSPQQQQGLRHLPNQN. Over residues 47 to 60 the composition is skewed to low complexity; it reads SPFGSGSTGFGSPS. The Bipartite nuclear localization signal motif lies at 98 to 106; it reads KRKRGRPRK. The segment at residues 98–110 is a DNA-binding region (a.T hook 1); the sequence is KRKRGRPRKYGQD. Positions 112 to 131 are enriched in low complexity; that stretch reads SVSLALSSSSVSTITPNNSN. Residues 132 to 144 constitute a DNA-binding region (a.T hook 2); it reads KRGRGRPPGSGKK. The PPC domain occupies 157-299; that stretch reads SSGMSFTPHV…EEEASEVVQE (143 aa).

The protein resides in the nucleus. Its function is as follows. Transcription factor that specifically binds AT-rich DNA sequences related to the nuclear matrix attachment regions (MARs). This Arabidopsis thaliana (Mouse-ear cress) protein is AT-hook motif nuclear-localized protein 9.